A 293-amino-acid polypeptide reads, in one-letter code: Small ribosomal subunit biogenesis GTPase RsgA (293 aa).

In terms of domain architecture, CP-type G spans 63–223; the sequence is KNELVRPPIA…VADTPGFSSL (161 aa). Residues 112-115 and 166-174 contribute to the GTP site; these read SKMD and GQSGVGKSS. Zn(2+) is bound by residues Cys247, Cys252, His254, and Cys260.

It belongs to the TRAFAC class YlqF/YawG GTPase family. RsgA subfamily. As to quaternary structure, monomer. Associates with 30S ribosomal subunit, binds 16S rRNA. It depends on Zn(2+) as a cofactor.

Its subcellular location is the cytoplasm. Its function is as follows. One of several proteins that assist in the late maturation steps of the functional core of the 30S ribosomal subunit. Helps release RbfA from mature subunits. May play a role in the assembly of ribosomal proteins into the subunit. Circularly permuted GTPase that catalyzes slow GTP hydrolysis, GTPase activity is stimulated by the 30S ribosomal subunit. In Bacillus cytotoxicus (strain DSM 22905 / CIP 110041 / 391-98 / NVH 391-98), this protein is Small ribosomal subunit biogenesis GTPase RsgA.